The following is a 507-amino-acid chain: Xaa-Pro aminopeptidase 3 (507 aa).

A mitochondrion-targeting transit peptide spans 1–31; sequence MPWLLSAPKLVPAVANVRGLSGCMLCSQRRY. Residues 54–79 form an interaction with TNFRSF1B region; that stretch reads HPHLLRPGEVTPGLSQVEYALRRHKL. The substrate site is built by tyrosine 300, aspartate 331, aspartate 342, histidine 424, histidine 431, glutamate 451, and glutamate 475. Mn(2+) is bound by residues aspartate 331, aspartate 342, and histidine 424. Glutamate 451 and glutamate 475 together coordinate Mn(2+).

The protein belongs to the peptidase M24B family. Homodimer. Isoform 1 interacts with TNFRSF1B/TNFR2 (activated) and TRAF2. The cofactor is Mn(2+). As to expression, isoform 1 and isoform 2 are widely expressed, with isoform 1 being more abundant.

The protein resides in the mitochondrion. The protein localises to the cytoplasm. The enzyme catalyses Release of any N-terminal amino acid, including proline, that is linked to proline, even from a dipeptide or tripeptide.. Functionally, catalyzes the removal of a penultimate prolyl residue from the N-termini of peptides, such as Leu-Pro-Ala. Also shows low activity towards peptides with Ala or Ser at the P1 position. Promotes TNFRSF1B-mediated phosphorylation of MAPK8/JNK1 and MAPK9/JNK2, suggesting a function as an adapter protein for TNFRSF1B; the effect is independent of XPNPEP3 peptidase activity. May inhibit apoptotic cell death induced via TNF-TNFRSF1B signaling. This is Xaa-Pro aminopeptidase 3 (XPNPEP3) from Homo sapiens (Human).